A 776-amino-acid chain; its full sequence is Endonuclease MutS2 (776 aa).

An ATP-binding site is contributed by 330 to 337 (GPNTGGKT). Residues 701 to 776 (LDLRGMRYEE…GSGATIAILK (76 aa)) form the Smr domain.

It belongs to the DNA mismatch repair MutS family. MutS2 subfamily. Homodimer. Binds to stalled ribosomes, contacting rRNA.

In terms of biological role, endonuclease that is involved in the suppression of homologous recombination and thus may have a key role in the control of bacterial genetic diversity. Its function is as follows. Acts as a ribosome collision sensor, splitting the ribosome into its 2 subunits. Detects stalled/collided 70S ribosomes which it binds and splits by an ATP-hydrolysis driven conformational change. Acts upstream of the ribosome quality control system (RQC), a ribosome-associated complex that mediates the extraction of incompletely synthesized nascent chains from stalled ribosomes and their subsequent degradation. Probably generates substrates for RQC. This chain is Endonuclease MutS2, found in Lactococcus lactis subsp. cremoris (strain SK11).